A 229-amino-acid polypeptide reads, in one-letter code: NAD(P)H-hydrate epimerase (229 aa).

One can recognise a YjeF N-terminal domain in the interval 9–216 (AISVDEELFN…KLEEKYAMNL (208 aa)). (6S)-NADPHX is bound at residue 59–63 (NNGGD). The K(+) site is built by asparagine 60 and aspartate 124. (6S)-NADPHX is bound by residues 128 to 134 (GFSFKPP) and aspartate 157. Serine 160 is a K(+) binding site.

The protein belongs to the NnrE/AIBP family. Requires K(+) as cofactor.

The enzyme catalyses (6R)-NADHX = (6S)-NADHX. The catalysed reaction is (6R)-NADPHX = (6S)-NADPHX. Catalyzes the epimerization of the S- and R-forms of NAD(P)HX, a damaged form of NAD(P)H that is a result of enzymatic or heat-dependent hydration. This is a prerequisite for the S-specific NAD(P)H-hydrate dehydratase to allow the repair of both epimers of NAD(P)HX. The polypeptide is NAD(P)H-hydrate epimerase (Anopheles gambiae (African malaria mosquito)).